We begin with the raw amino-acid sequence, 622 residues long: Low affinity potassium transport system protein Kup (622 aa).

12 helical membrane-spanning segments follow: residues 9 to 29 (LPALTLAAIGVVYGDIGTSPL), 49 to 69 (VFGFLSLIFWLLIFTVSIKYI), 101 to 121 (VLVILGLIGGSFFYGEVVITP), 137 to 157 (PQLDTWIVPISIIVLTLLFVI), 163 to 183 (GMVGKLFAPIMLIWFLLLAVL), 213 to 233 (VSFIALGAVVLSITGVEALYA), 247 to 267 (WFSVVLPSLVLNYFGQGALLL), 276 to 296 (PFFLLAPEWALIPMLIIATLA), 337 to 357 (IYIPFINWLLYVSVVIVIVSF), 363 to 383 (LAAAYGIAVTGTMVLTSILSA), 395 to 415 (LFVGLMLVAFLCIDIPLFSAN), and 419 to 439 (IVSGGWLPLSLGMVMFTVMTT).

It belongs to the HAK/KUP transporter (TC 2.A.72) family.

Its subcellular location is the cell inner membrane. It catalyses the reaction K(+)(in) + H(+)(in) = K(+)(out) + H(+)(out). In terms of biological role, responsible for the low-affinity transport of potassium into the cell. Likely operates as a K(+):H(+) symporter. This is Low affinity potassium transport system protein Kup from Klebsiella pneumoniae subsp. pneumoniae (strain ATCC 700721 / MGH 78578).